The following is a 2422-amino-acid chain: Interferon-induced very large GTPase 1 (2422 aa).

Residues 945-965 (ENFFEDSDSPTKSSSTEPSPH) form a disordered region. The span at 954–963 (PTKSSSTEPS) shows a compositional bias: low complexity. A VLIG-type G domain is found at 1479–1720 (DKRLFVLSIL…KISDVKSRVQ (242 aa)). GTP contacts are provided by residues 1489–1496 (GLQSSGKS), 1542–1545 (DTEG), and 1619–1622 (TATD).

The protein belongs to the TRAFAC class dynamin-like GTPase superfamily. Very large inducible GTPase (VLIG) family.

Its subcellular location is the cytoplasm. It localises to the cytosol. It is found in the nucleus. The polypeptide is Interferon-induced very large GTPase 1 (GVINP1) (Homo sapiens (Human)).